The chain runs to 476 residues: ATP synthase subunit beta (476 aa).

154-161 (GGAGVGKT) contributes to the ATP binding site.

The protein belongs to the ATPase alpha/beta chains family. In terms of assembly, F-type ATPases have 2 components, CF(1) - the catalytic core - and CF(0) - the membrane proton channel. CF(1) has five subunits: alpha(3), beta(3), gamma(1), delta(1), epsilon(1). CF(0) has four main subunits: a(1), b(1), b'(1) and c(9-12).

The protein resides in the cell inner membrane. It carries out the reaction ATP + H2O + 4 H(+)(in) = ADP + phosphate + 5 H(+)(out). Its function is as follows. Produces ATP from ADP in the presence of a proton gradient across the membrane. The catalytic sites are hosted primarily by the beta subunits. The sequence is that of ATP synthase subunit beta from Rhodopseudomonas palustris (strain BisB5).